A 249-amino-acid chain; its full sequence is tRNA pseudouridine synthase A (249 aa).

Residue Asp-52 is the Nucleophile of the active site. Tyr-110 provides a ligand contact to substrate.

The protein belongs to the tRNA pseudouridine synthase TruA family. Homodimer.

It carries out the reaction uridine(38/39/40) in tRNA = pseudouridine(38/39/40) in tRNA. Functionally, formation of pseudouridine at positions 38, 39 and 40 in the anticodon stem and loop of transfer RNAs. The polypeptide is tRNA pseudouridine synthase A (Azobacteroides pseudotrichonymphae genomovar. CFP2).